Reading from the N-terminus, the 391-residue chain is Nucleosome assembly protein 1-like 1 (391 aa).

The span at 1 to 10 shows a compositional bias: basic and acidic residues; sequence MADIDNKEQS. The disordered stretch occupies residues 1–32; sequence MADIDNKEQSELDQDLEDVEEVEEEETGEETK. N-acetylalanine is present on alanine 2. A Phosphoserine modification is found at serine 10. The segment covering 11-28 has biased composition (acidic residues); sequence ELDQDLEDVEEVEEEETG. A phosphothreonine mark is found at threonine 62 and threonine 64. Serine 69 carries the post-translational modification Phosphoserine. At lysine 116 the chain carries N6-acetyllysine. The NAP1L motif signature appears at 125–150; sequence YEPTEEECEWKPDEEDEVSEELKEKA. A compositionally biased stretch (acidic residues) spans 131 to 143; it reads ECEWKPDEEDEVS. The tract at residues 131–163 is disordered; sequence ECEWKPDEEDEVSEELKEKAKIEDEKKDEEKED. Serine 143 carries the post-translational modification Phosphoserine. Positions 144-163 are enriched in basic and acidic residues; it reads EELKEKAKIEDEKKDEEKED. The Nuclear localization signal motif lies at 273–279; sequence IKKKQKH. Acidic residues predominate over residues 346–376; it reads AIEDDDDDYDEEGEEADEEGEEEGDEENDPD. Residues 346–391 form a disordered region; the sequence is AIEDDDDDYDEEGEEADEEGEEEGDEENDPDYDPKKDQNPAECKQQ. 5-glutamyl polyglycine occurs at positions 359 and 360. Basic and acidic residues predominate over residues 377–391; it reads YDPKKDQNPAECKQQ. At cysteine 388 the chain carries Cysteine methyl ester. A lipid anchor (S-farnesyl cysteine) is attached at cysteine 388. Positions 389 to 391 are cleaved as a propeptide — removed in mature form; the sequence is KQQ.

It belongs to the nucleosome assembly protein (NAP) family. Homodimer. The dimer binds strongly and sequentially to single and double H2A-H2B heterodimers. Interacts with ERCC6; this interaction increases ERCC6 processivity. Interacts with RAD54. Interacts with SETD1A. In terms of processing, polyglycylated by TTLL10 on glutamate residues, resulting in polyglycine chains on the gamma-carboxyl group. Both polyglutamylation and polyglycylation modifications can coexist on the same protein on adjacent residues, and lowering polyglycylation levels increases polyglutamylation, and reciprocally. Polyglutamylated by TTLL4 on glutamate residues, resulting in polyglutamate chains on the gamma-carboxyl group. Both polyglutamylation and polyglycylation modifications can coexist on the same protein on adjacent residues, and lowering polyglycylation levels increases polyglutamylation, and reciprocally. As to expression, highly expressed in the brain (at protein level). High expression in cerebral cortex, not in cerebellar cortex.

The protein localises to the nucleus. It localises to the cytoplasm. Its subcellular location is the melanosome. Its function is as follows. Histone chaperone that plays a role in the nuclear import of H2A-H2B and nucleosome assembly. Also participates in several important DNA repair mechanisms: greatly enhances ERCC6-mediated chromatin remodeling which is essential for transcription-coupled nucleotide excision DNA repair. Also stimulates homologous recombination (HR) by RAD51 and RAD54 which is essential in mitotic DNA double strand break (DSB) repair. Plays a key role in the regulation of embryonic neurogenesis. Promotes the proliferation of neural progenitors and inhibits neuronal differentiation during cortical development. Regulates neurogenesis via the modulation of RASSF10; regulates RASSF10 expression by promoting SETD1A-mediated H3K4 methylation at the RASSF10 promoter. This Mus musculus (Mouse) protein is Nucleosome assembly protein 1-like 1 (Nap1l1).